Reading from the N-terminus, the 294-residue chain is UDP-3-O-acyl-N-acetylglucosamine deacetylase (294 aa).

3 residues coordinate Zn(2+): His75, His232, and Asp236. The active-site Proton donor is the His259.

It belongs to the LpxC family. Requires Zn(2+) as cofactor.

It catalyses the reaction a UDP-3-O-[(3R)-3-hydroxyacyl]-N-acetyl-alpha-D-glucosamine + H2O = a UDP-3-O-[(3R)-3-hydroxyacyl]-alpha-D-glucosamine + acetate. It functions in the pathway glycolipid biosynthesis; lipid IV(A) biosynthesis; lipid IV(A) from (3R)-3-hydroxytetradecanoyl-[acyl-carrier-protein] and UDP-N-acetyl-alpha-D-glucosamine: step 2/6. Catalyzes the hydrolysis of UDP-3-O-myristoyl-N-acetylglucosamine to form UDP-3-O-myristoylglucosamine and acetate, the committed step in lipid A biosynthesis. The chain is UDP-3-O-acyl-N-acetylglucosamine deacetylase from Campylobacter hominis (strain ATCC BAA-381 / DSM 21671 / CCUG 45161 / LMG 19568 / NCTC 13146 / CH001A).